The primary structure comprises 71 residues: MHMSLEVLEQLESKVQSAVDNISLLKMELDELKEQNSKLQDENHLLRNEHVAWQERLRALLGKMEQMGESI.

Positions 5–67 (LEVLEQLESK…RALLGKMEQM (63 aa)) form a coiled coil.

This sequence belongs to the ZapB family. As to quaternary structure, homodimer. The ends of the coiled-coil dimer bind to each other, forming polymers. Interacts with FtsZ.

It is found in the cytoplasm. Its function is as follows. Non-essential, abundant cell division factor that is required for proper Z-ring formation. It is recruited early to the divisome by direct interaction with FtsZ, stimulating Z-ring assembly and thereby promoting cell division earlier in the cell cycle. Its recruitment to the Z-ring requires functional FtsA or ZipA. This Aeromonas salmonicida (strain A449) protein is Cell division protein ZapB.